Consider the following 95-residue polypeptide: Aspartyl/glutamyl-tRNA(Asn/Gln) amidotransferase subunit C (95 aa).

The protein belongs to the GatC family. As to quaternary structure, heterotrimer of A, B and C subunits.

The catalysed reaction is L-glutamyl-tRNA(Gln) + L-glutamine + ATP + H2O = L-glutaminyl-tRNA(Gln) + L-glutamate + ADP + phosphate + H(+). It catalyses the reaction L-aspartyl-tRNA(Asn) + L-glutamine + ATP + H2O = L-asparaginyl-tRNA(Asn) + L-glutamate + ADP + phosphate + 2 H(+). Functionally, allows the formation of correctly charged Asn-tRNA(Asn) or Gln-tRNA(Gln) through the transamidation of misacylated Asp-tRNA(Asn) or Glu-tRNA(Gln) in organisms which lack either or both of asparaginyl-tRNA or glutaminyl-tRNA synthetases. The reaction takes place in the presence of glutamine and ATP through an activated phospho-Asp-tRNA(Asn) or phospho-Glu-tRNA(Gln). The polypeptide is Aspartyl/glutamyl-tRNA(Asn/Gln) amidotransferase subunit C (Rhodospirillum centenum (strain ATCC 51521 / SW)).